The following is a 367-amino-acid chain: Glutamate 5-kinase (367 aa).

Lys-9 serves as a coordination point for ATP. Ser-49, Asp-136, and Asn-148 together coordinate substrate. ATP-binding positions include 168–169 and 210–216; these read TD and TGGMKSK. Residues 276–350 enclose the PUA domain; sequence SGQIEIDAGA…GMQSQQIQAR (75 aa).

Belongs to the glutamate 5-kinase family.

It is found in the cytoplasm. The catalysed reaction is L-glutamate + ATP = L-glutamyl 5-phosphate + ADP. The protein operates within amino-acid biosynthesis; L-proline biosynthesis; L-glutamate 5-semialdehyde from L-glutamate: step 1/2. Catalyzes the transfer of a phosphate group to glutamate to form L-glutamate 5-phosphate. The polypeptide is Glutamate 5-kinase (Bacillus anthracis).